Consider the following 333-residue polypeptide: MQELRLVLILVGALAIAALLFHGLWTSRKETSSKFGKKVDIDFDSDVDDEQAAPMRGFDQPKEDVVVQKERKEPAFAREEVPTSDDPLFEGTVSSESNKFTQQEKPTVQQAQPQPQPQPVVQQVQEPTVGRIEPEAKPVAAPVKREEPTISFSAIDDEVLTQPEPVQAKVDIPETSTYLEPEIIIEEPEPEPEPELEEDVIVINVHGMGSDRFSGNRLFNSLEQNGLVFGDMAIYHRHSDLSGAGKVLFSVANMVSPGHFQVPEGEEFSTPGISFFLPLPCYGDAEHNFKLMLQTAQMISSELGGNVLDEKRDMLTPNKIDEYKQRVKVFCRK.

The Periplasmic portion of the chain corresponds to 1-5; sequence MQELR. Residues 6–26 form a helical membrane-spanning segment; that stretch reads LVLILVGALAIAALLFHGLWT. The Cytoplasmic portion of the chain corresponds to 27–333; it reads SRKETSSKFG…KQRVKVFCRK (307 aa). Residues 72 to 81 show a composition bias toward basic and acidic residues; the sequence is KEPAFAREEV. Residues 72 to 119 form a disordered region; that stretch reads KEPAFAREEVPTSDDPLFEGTVSSESNKFTQQEKPTVQQAQPQPQPQP. Residues 92–107 show a composition bias toward polar residues; it reads TVSSESNKFTQQEKPT. The span at 108–119 shows a compositional bias: low complexity; the sequence is VQQAQPQPQPQP.

It belongs to the ZipA family. In terms of assembly, interacts with FtsZ via their C-terminal domains.

The protein resides in the cell inner membrane. Essential cell division protein that stabilizes the FtsZ protofilaments by cross-linking them and that serves as a cytoplasmic membrane anchor for the Z ring. Also required for the recruitment to the septal ring of downstream cell division proteins. The sequence is that of Cell division protein ZipA from Aliivibrio fischeri (strain ATCC 700601 / ES114) (Vibrio fischeri).